Here is a 159-residue protein sequence, read N- to C-terminus: Small ribosomal subunit protein uS7 (159 aa).

This sequence belongs to the universal ribosomal protein uS7 family. As to quaternary structure, part of the 30S ribosomal subunit. Contacts proteins S9 and S11.

One of the primary rRNA binding proteins, it binds directly to 16S rRNA where it nucleates assembly of the head domain of the 30S subunit. Is located at the subunit interface close to the decoding center, probably blocks exit of the E-site tRNA. The polypeptide is Small ribosomal subunit protein uS7 (Elusimicrobium minutum (strain Pei191)).